The following is a 450-amino-acid chain: Probable ECA polymerase (450 aa).

Helical transmembrane passes span 6-26 (FSGLLVVWLLSTLFIATLTWF), 37-57 (VFFSLLFLLTFFFGFPLTSVL), 63-83 (VGVAPPEILLQALLSAACFYA), 120-140 (LMGIALVSVGIFFMHNGFLLF), 155-175 (GVALKRFFYFFIPAMLVIYFL), 181-201 (AWLFFLVSTVAFGLLTYMIVG), 207-227 (IIIAFAIFLFIGIIRGWISLW), 228-248 (MLVAAGVLGIVGMFWLALKRY), 341-361 (LVVMGGALFIPLGAVAVGLII), 378-398 (YKAAILHSFCFGAIFNMIVLA), and 410-430 (VFFLVIFGACLLVAKLLFWLF).

Belongs to the WzyE family. In terms of assembly, probably part of a complex composed of WzxE, WzyE and WzzE.

It is found in the cell inner membrane. The protein operates within bacterial outer membrane biogenesis; enterobacterial common antigen biosynthesis. In terms of biological role, probably involved in the polymerization of enterobacterial common antigen (ECA) trisaccharide repeat units. In Citrobacter koseri (strain ATCC BAA-895 / CDC 4225-83 / SGSC4696), this protein is Probable ECA polymerase.